A 349-amino-acid chain; its full sequence is Sphingomyelinase D (349 aa).

An N-terminal signal peptide occupies residues Met-1–Ala-18. Residue His-52 is part of the active site. The Mg(2+) site is built by Glu-72, Asp-74, and Asp-123. The short motif at Ala-310–Trp-317 is the SMD-tail element.

This sequence belongs to the sphingomyelinase D/phospholipase D family. Mg(2+) is required as a cofactor.

It localises to the secreted. The enzyme catalyses a sphingomyelin + H2O = an N-acylsphing-4-enine 1-phosphate + choline + H(+). Functionally, catalyzes the hydrolysis of sphingomyelin. Sphingomyelinases D are produced by some spider in their venoms, but also by arthropods such as ticks, or pathogenic bacteria and fungi. They might play a role in pathogenicity through different mechanisms, such as membrane destabilization and host cell penetration, but also pulmonary inflammation and cutaneous lesions. The sequence is that of Sphingomyelinase D from Uncinocarpus reesii (strain UAMH 1704).